Consider the following 286-residue polypeptide: Rhomboid-type serine protease 2 (286 aa).

The next 6 helical transmembrane spans lie at 18 to 38 (ITQY…LLVI), 66 to 86 (SFYL…VGLF), 99 to 119 (VFTG…FCIV), 122 to 142 (LLYP…FMSF), 164 to 183 (VSIP…MVLI), and 188 to 210 (FWGH…KFLY). Residue serine 133 is the Nucleophile of the active site. Residue histidine 191 is part of the active site.

The protein belongs to the peptidase S54 family.

It localises to the golgi apparatus membrane. The protein resides in the golgi apparatus. The protein localises to the cis-Golgi network membrane. The enzyme catalyses Cleaves type-1 transmembrane domains using a catalytic dyad composed of serine and histidine that are contributed by different transmembrane domains.. Functionally, probable rhomboid-type serine protease that catalyzes intramembrane proteolysis. The sequence is that of Rhomboid-type serine protease 2 (RBD2) from Debaryomyces hansenii (strain ATCC 36239 / CBS 767 / BCRC 21394 / JCM 1990 / NBRC 0083 / IGC 2968) (Yeast).